A 662-amino-acid polypeptide reads, in one-letter code: ABC transporter G family member 25 (662 aa).

The interval 1–30 is disordered; sequence MSAFDGVENQMNGPDSSPRLSQDPREPRSL. Over residues 9–20 the composition is skewed to polar residues; sequence NQMNGPDSSPRL. N-linked (GlcNAc...) asparagine glycosylation is present at N56. The ABC transporter domain occupies 69–308; that stretch reads QKPSDETRST…FESVGFSPAF (240 aa). 101 to 108 contributes to the ATP binding site; it reads GPSGSGKS. N122 is a glycosylation site (N-linked (GlcNAc...) asparagine). The next 7 membrane-spanning stretches (helical) occupy residues 374–394, 406–426, 437–457, 489–509, 522–542, 547–567, and 629–649; these read VNGGGITTCIATWFSQLCILL, FDLLRIFQVVAASILCGLMWW, LGLLFFISIFWGVLPSFNAVF, LSMELVLPASFLTFTYWMVYL, VLLLYVLASQGLGLALGAAIM, ASTIVTVTMLAFVLTGGYYVN, and VIGDVGMWTSVGVLFLMFFGY. An ABC transmembrane type-2 domain is found at 388 to 594; that stretch reads SQLCILLHRL…CYRLLVAIQY (207 aa).

Belongs to the ABC transporter superfamily. ABCG family. Eye pigment precursor importer (TC 3.A.1.204) subfamily. Mainly expressed in vascular tissues,predominantly in phloem companion cells, with highest levels in roots and seeds, and lower levels in seedlings, stems, leaves and flowers. Mostly observed in inflorescence meristems relative to cauline leaves and developing siliques. In seeds, mainly expressed in the endosperm and, to a lesser extent, in the embryo.

The protein resides in the cell membrane. The enzyme catalyses abscisate(in) + ATP + H2O = abscisate(out) + ADP + phosphate + H(+). ADP and vanadate (ABC transporters inhibitor) inhibit the ATP-dependent abscisic acid (ABA) uptake. Its function is as follows. High affinity abscisic acid (ABA) transporter that mediates the export of ABA, with a preference for (+)-ABA, through the plasma membrane, especially in vascular tissues (e.g. phloem companion cells), and is involved in the intercellular ABA signaling pathway. Together with ABCG31, export ABA from the endosperm to deliver it to the embryo via ABCG30 and ABCG40-mediated import to suppress radicle extension and subsequent embryonic growth. The sequence is that of ABC transporter G family member 25 from Arabidopsis thaliana (Mouse-ear cress).